Reading from the N-terminus, the 356-residue chain is Putative KilA-N domain-containing protein R878 (356 aa).

Over residues 1–12 (MKVRKSNNKPLK) the composition is skewed to basic residues. The disordered stretch occupies residues 1 to 114 (MKVRKSNNKP…DDDGSDNNVY (114 aa)). The segment covering 14 to 46 (SASFTSGTKTGSKSAKSVNSGSKSMKSTKSSSK) has biased composition (low complexity). Acidic residues predominate over residues 66 to 114 (SDNDELSDNEISDNESSDDDEISDNESSDDDEISDNEISDDDGSDNNVY). A KilA-N domain is found at 130 to 239 (NYSKGKFGNF…VRIGFCMEEW (110 aa)).

The polypeptide is Putative KilA-N domain-containing protein R878 (Acanthamoeba polyphaga (Amoeba)).